A 317-amino-acid polypeptide reads, in one-letter code: Dehydrogenase/reductase SDR family member 12 (317 aa).

Positions 50 and 52 each coordinate NAD(+). Substrate is bound at residue serine 175. Tyrosine 201, lysine 205, and threonine 234 together coordinate NAD(+). The active-site Proton acceptor is tyrosine 201.

The protein belongs to the short-chain dehydrogenases/reductases (SDR) family.

Functionally, putative oxidoreductase. The sequence is that of Dehydrogenase/reductase SDR family member 12 from Homo sapiens (Human).